The sequence spans 394 residues: Chorismate synthase (394 aa).

Arg-48 contributes to the NADP(+) binding site. Residues 52–90 (QSMITTSRGEPDEVSIQSGLQDGYTTGTPIGMTIENKDA) are disordered. Polar residues predominate over residues 66 to 79 (SIQSGLQDGYTTGT). FMN-binding positions include 125 to 127 (RSS), Gly-297, 312 to 316 (HAPTS), and Arg-339.

Belongs to the chorismate synthase family. It depends on FMNH2 as a cofactor.

The catalysed reaction is 5-O-(1-carboxyvinyl)-3-phosphoshikimate = chorismate + phosphate. The protein operates within metabolic intermediate biosynthesis; chorismate biosynthesis; chorismate from D-erythrose 4-phosphate and phosphoenolpyruvate: step 7/7. Functionally, catalyzes the anti-1,4-elimination of the C-3 phosphate and the C-6 proR hydrogen from 5-enolpyruvylshikimate-3-phosphate (EPSP) to yield chorismate, which is the branch point compound that serves as the starting substrate for the three terminal pathways of aromatic amino acid biosynthesis. This reaction introduces a second double bond into the aromatic ring system. This Halobacterium salinarum (strain ATCC 700922 / JCM 11081 / NRC-1) (Halobacterium halobium) protein is Chorismate synthase.